We begin with the raw amino-acid sequence, 266 residues long: Undecaprenyl-diphosphatase (266 aa).

A run of 8 helical transmembrane segments spans residues Ile4 to Ser24, Leu39 to Tyr59, Leu88 to Ile108, Leu114 to Ile134, Ile147 to Ser167, Ser186 to Tyr206, Ile214 to Phe234, and Ser246 to Val266.

Belongs to the UppP family.

The protein localises to the cell inner membrane. It catalyses the reaction di-trans,octa-cis-undecaprenyl diphosphate + H2O = di-trans,octa-cis-undecaprenyl phosphate + phosphate + H(+). Its function is as follows. Catalyzes the dephosphorylation of undecaprenyl diphosphate (UPP). Confers resistance to bacitracin. The protein is Undecaprenyl-diphosphatase of Borrelia recurrentis (strain A1).